We begin with the raw amino-acid sequence, 253 residues long: Imidazole glycerol phosphate synthase subunit HisF (253 aa).

Active-site residues include aspartate 11 and aspartate 130.

It belongs to the HisA/HisF family. As to quaternary structure, heterodimer of HisH and HisF.

It is found in the cytoplasm. The catalysed reaction is 5-[(5-phospho-1-deoxy-D-ribulos-1-ylimino)methylamino]-1-(5-phospho-beta-D-ribosyl)imidazole-4-carboxamide + L-glutamine = D-erythro-1-(imidazol-4-yl)glycerol 3-phosphate + 5-amino-1-(5-phospho-beta-D-ribosyl)imidazole-4-carboxamide + L-glutamate + H(+). The protein operates within amino-acid biosynthesis; L-histidine biosynthesis; L-histidine from 5-phospho-alpha-D-ribose 1-diphosphate: step 5/9. Functionally, IGPS catalyzes the conversion of PRFAR and glutamine to IGP, AICAR and glutamate. The HisF subunit catalyzes the cyclization activity that produces IGP and AICAR from PRFAR using the ammonia provided by the HisH subunit. This Clostridium botulinum (strain Kyoto / Type A2) protein is Imidazole glycerol phosphate synthase subunit HisF.